Reading from the N-terminus, the 172-residue chain is Xanthine-guanine phosphoribosyltransferase (172 aa).

5-phospho-alpha-D-ribose 1-diphosphate contacts are provided by residues 47–48 (RG) and 106–114 (DDLVDTGKT). Asp-107 is a binding site for Mg(2+). Residues Asp-110 and Ile-153 each coordinate guanine. Asp-110 and Ile-153 together coordinate xanthine. Residues 110-114 (DTGKT) and 152-153 (WI) contribute to the GMP site.

It belongs to the purine/pyrimidine phosphoribosyltransferase family. XGPT subfamily. As to quaternary structure, homotetramer. The cofactor is Mg(2+).

It localises to the cell inner membrane. It catalyses the reaction GMP + diphosphate = guanine + 5-phospho-alpha-D-ribose 1-diphosphate. The catalysed reaction is XMP + diphosphate = xanthine + 5-phospho-alpha-D-ribose 1-diphosphate. It carries out the reaction IMP + diphosphate = hypoxanthine + 5-phospho-alpha-D-ribose 1-diphosphate. The protein operates within purine metabolism; GMP biosynthesis via salvage pathway; GMP from guanine: step 1/1. Its pathway is purine metabolism; XMP biosynthesis via salvage pathway; XMP from xanthine: step 1/1. Its function is as follows. Purine salvage pathway enzyme that catalyzes the transfer of the ribosyl-5-phosphate group from 5-phospho-alpha-D-ribose 1-diphosphate (PRPP) to the N9 position of the 6-oxopurines guanine and xanthine to form the corresponding ribonucleotides GMP (guanosine 5'-monophosphate) and XMP (xanthosine 5'-monophosphate), with the release of PPi. To a lesser extent, also acts on hypoxanthine. This Rhodopseudomonas palustris (strain BisB5) protein is Xanthine-guanine phosphoribosyltransferase.